Consider the following 106-residue polypeptide: Thioredoxin (106 aa).

The 105-residue stretch at 2 to 106 (VNFLKTKADF…GLREKIKKNK (105 aa)) folds into the Thioredoxin domain. Residues Cys-32 and Cys-35 each act as nucleophile in the active site. Cys-32 and Cys-35 are joined by a disulfide.

This sequence belongs to the thioredoxin family.

The protein localises to the cytoplasm. Functionally, participates in various redox reactions through the reversible oxidation of its active center dithiol to a disulfide and catalyzes dithiol-disulfide exchange reactions. In Geodia cydonium (Sponge), this protein is Thioredoxin (THIO).